Here is a 116-residue protein sequence, read N- to C-terminus: S-adenosylmethionine decarboxylase proenzyme (116 aa).

The active-site Schiff-base intermediate with substrate; via pyruvic acid is S63. S63 bears the Pyruvic acid (Ser); by autocatalysis mark. H68 serves as the catalytic Proton acceptor; for processing activity. Catalysis depends on C83, which acts as the Proton donor; for catalytic activity.

It belongs to the prokaryotic AdoMetDC family. Type 1 subfamily. In terms of assembly, heterotetramer of two alpha and two beta chains arranged as a dimer of alpha/beta heterodimers. It depends on pyruvate as a cofactor. Post-translationally, is synthesized initially as an inactive proenzyme. Formation of the active enzyme involves a self-maturation process in which the active site pyruvoyl group is generated from an internal serine residue via an autocatalytic post-translational modification. Two non-identical subunits are generated from the proenzyme in this reaction, and the pyruvate is formed at the N-terminus of the alpha chain, which is derived from the carboxyl end of the proenzyme. The post-translation cleavage follows an unusual pathway, termed non-hydrolytic serinolysis, in which the side chain hydroxyl group of the serine supplies its oxygen atom to form the C-terminus of the beta chain, while the remainder of the serine residue undergoes an oxidative deamination to produce ammonia and the pyruvoyl group blocking the N-terminus of the alpha chain.

It carries out the reaction S-adenosyl-L-methionine + H(+) = S-adenosyl 3-(methylsulfanyl)propylamine + CO2. It functions in the pathway amine and polyamine biosynthesis; S-adenosylmethioninamine biosynthesis; S-adenosylmethioninamine from S-adenosyl-L-methionine: step 1/1. Its function is as follows. Catalyzes the decarboxylation of S-adenosylmethionine to S-adenosylmethioninamine (dcAdoMet), the propylamine donor required for the synthesis of the polyamines spermine and spermidine from the diamine putrescine. The chain is S-adenosylmethionine decarboxylase proenzyme from Clostridium botulinum (strain 657 / Type Ba4).